Here is a 253-residue protein sequence, read N- to C-terminus: Probable transcriptional regulatory protein RPR_05505 (253 aa).

Belongs to the TACO1 family.

Its subcellular location is the cytoplasm. The polypeptide is Probable transcriptional regulatory protein RPR_05505 (Rickettsia peacockii (strain Rustic)).